A 95-amino-acid chain; its full sequence is Aspartyl/glutamyl-tRNA(Asn/Gln) amidotransferase subunit C (95 aa).

It belongs to the GatC family. In terms of assembly, heterotrimer of A, B and C subunits.

It carries out the reaction L-glutamyl-tRNA(Gln) + L-glutamine + ATP + H2O = L-glutaminyl-tRNA(Gln) + L-glutamate + ADP + phosphate + H(+). It catalyses the reaction L-aspartyl-tRNA(Asn) + L-glutamine + ATP + H2O = L-asparaginyl-tRNA(Asn) + L-glutamate + ADP + phosphate + 2 H(+). In terms of biological role, allows the formation of correctly charged Asn-tRNA(Asn) or Gln-tRNA(Gln) through the transamidation of misacylated Asp-tRNA(Asn) or Glu-tRNA(Gln) in organisms which lack either or both of asparaginyl-tRNA or glutaminyl-tRNA synthetases. The reaction takes place in the presence of glutamine and ATP through an activated phospho-Asp-tRNA(Asn) or phospho-Glu-tRNA(Gln). The chain is Aspartyl/glutamyl-tRNA(Asn/Gln) amidotransferase subunit C from Bradyrhizobium sp. (strain ORS 278).